A 515-amino-acid chain; its full sequence is UBP3-associated protein BRE5 (515 aa).

The NTF2 domain maps to 8–140 (ICFAFLQNYY…FDITNDIIRF (133 aa)). A compositionally biased stretch (low complexity) spans 157 to 166 (QSNEENSVSA). Disordered stretches follow at residues 157–410 (QSNE…PVFS) and 485–515 (KTVKKPTSNNPPGIFTNGTRSHRKQPLKRKD). Basic and acidic residues predominate over residues 168–201 (EEDKIRHESGVEKEKEKEKSPEISKPKAKKETVK). Ser187 is subject to Phosphoserine. Residues 202-213 (DTTAPTESSTQE) show a composition bias toward polar residues. Composition is skewed to basic and acidic residues over residues 262–282 (LNEKSHKAEKKAAPIKTKEGS) and 299–319 (EVSDEKPVPGGVKEAETEIKP). Ser282 carries the post-translational modification Phosphoserine. A compositionally biased stretch (polar residues) spans 330-341 (SGNNASTPSSSP). A Phosphothreonine modification is found at Thr336. Phosphoserine is present on Ser340. A compositionally biased stretch (basic and acidic residues) spans 374–396 (IRPETLPKKPTERKFEMGNRRDN). Residue Ser398 is modified to Phosphoserine. The RRM domain occupies 418-494 (YPIYIRGTNG…KTVKKPTSNN (77 aa)). Polar residues predominate over residues 489 to 503 (KPTSNNPPGIFTNGT). Positions 504–515 (RSHRKQPLKRKD) are enriched in basic residues.

As to quaternary structure, heterotetramer with UBP3; contains two molecules of BRE5 and two molecules of UBP3. Forms a complex composed of CDC48, DOA1, deubiquitinase UBP3 and probably BRE5. Within the complex, interacts (via C-terminus) with CDC48; the interaction is direct and UBP3-independent.

Functionally, has a role in de-ubiquitination. In conjunction with UBP3, cleaves ubiquitin, leading to the subsequent mono-ubiquitination of sec23. The chain is UBP3-associated protein BRE5 (BRE5) from Saccharomyces cerevisiae (strain ATCC 204508 / S288c) (Baker's yeast).